Here is a 113-residue protein sequence, read N- to C-terminus: Large ribosomal subunit protein uL22 (113 aa).

This sequence belongs to the universal ribosomal protein uL22 family. Part of the 50S ribosomal subunit.

Functionally, this protein binds specifically to 23S rRNA; its binding is stimulated by other ribosomal proteins, e.g. L4, L17, and L20. It is important during the early stages of 50S assembly. It makes multiple contacts with different domains of the 23S rRNA in the assembled 50S subunit and ribosome. In terms of biological role, the globular domain of the protein is located near the polypeptide exit tunnel on the outside of the subunit, while an extended beta-hairpin is found that lines the wall of the exit tunnel in the center of the 70S ribosome. This is Large ribosomal subunit protein uL22 from Trichlorobacter lovleyi (strain ATCC BAA-1151 / DSM 17278 / SZ) (Geobacter lovleyi).